A 200-amino-acid polypeptide reads, in one-letter code: Imidazoleglycerol-phosphate dehydratase (200 aa).

Belongs to the imidazoleglycerol-phosphate dehydratase family.

It is found in the cytoplasm. The enzyme catalyses D-erythro-1-(imidazol-4-yl)glycerol 3-phosphate = 3-(imidazol-4-yl)-2-oxopropyl phosphate + H2O. The protein operates within amino-acid biosynthesis; L-histidine biosynthesis; L-histidine from 5-phospho-alpha-D-ribose 1-diphosphate: step 6/9. This chain is Imidazoleglycerol-phosphate dehydratase, found in Chlorobium limicola (strain DSM 245 / NBRC 103803 / 6330).